The primary structure comprises 400 residues: ATP-dependent RNA helicase Ddx1 (400 aa).

One can recognise a Helicase ATP-binding domain in the interval 1–60; it reads DDEADRLLKQGYTDLIERLHKQIPKITSDGCRLQMIVCSATLHAFEVKKMAERLMHFPTW. A DEAD box motif is present at residues 2-5; the sequence is DEAD. One can recognise a Helicase C-terminal domain in the interval 115–316; sequence TFSQAVKLLK…QVVKSLDVPV (202 aa).

This sequence belongs to the DEAD box helicase family. DDX1 subfamily.

It catalyses the reaction ATP + H2O = ADP + phosphate + H(+). Functionally, acts as an ATP-dependent RNA helicase, able to unwind both RNA-RNA and RNA-DNA duplexes. Possesses 5' single-stranded RNA overhang nuclease activity. This is ATP-dependent RNA helicase Ddx1 (Ddx1) from Drosophila virilis (Fruit fly).